The sequence spans 506 residues: Beta-glucosidase 13 (506 aa).

Positions 1 to 25 are cleaved as a signal peptide; sequence MAAAGEVVMLGGILLPLLLVVAVSG. Glutamine 49 provides a ligand contact to a beta-D-glucoside. Asparagine 118 carries N-linked (GlcNAc...) asparagine glycosylation. Residues histidine 153 and 198–199 each bind a beta-D-glucoside; that span reads NE. Catalysis depends on glutamate 199, which acts as the Proton donor. A disulfide bridge connects residues cysteine 219 and cysteine 226. Asparagine 225 is a glycosylation site (N-linked (GlcNAc...) asparagine). Tyrosine 342 lines the a beta-D-glucoside pocket. Asparagine 357 and asparagine 367 each carry an N-linked (GlcNAc...) asparagine glycan. Glutamate 413 contacts a beta-D-glucoside. The active-site Nucleophile is glutamate 413. Asparagine 421 is a glycosylation site (N-linked (GlcNAc...) asparagine). A beta-D-glucoside-binding positions include tryptophan 462, 469 to 470, and phenylalanine 478; that span reads EW.

This sequence belongs to the glycosyl hydrolase 1 family.

The catalysed reaction is Hydrolysis of terminal, non-reducing beta-D-glucosyl residues with release of beta-D-glucose.. The sequence is that of Beta-glucosidase 13 (BGLU13) from Oryza sativa subsp. japonica (Rice).